We begin with the raw amino-acid sequence, 322 residues long: Replication factor C small subunit (322 aa).

46–53 (GSAGVGKT) contributes to the ATP binding site.

This sequence belongs to the activator 1 small subunits family. RfcS subfamily. In terms of assembly, heteromultimer composed of small subunits (RfcS) and large subunits (RfcL).

In terms of biological role, part of the RFC clamp loader complex which loads the PCNA sliding clamp onto DNA. The chain is Replication factor C small subunit from Methanoregula boonei (strain DSM 21154 / JCM 14090 / 6A8).